The chain runs to 96 residues: Protein RnfH (96 aa).

Belongs to the UPF0125 (RnfH) family.

The polypeptide is Protein RnfH (Escherichia coli O139:H28 (strain E24377A / ETEC)).